Consider the following 121-residue polypeptide: Cell division protein FtsL (121 aa).

Over 1 to 34 the chain is Cytoplasmic; it reads MISRVTEALSKVKGSMGSHERHALPGVIGDDLLR. The helical transmembrane segment at 35–57 threads the bilayer; it reads FGKLPLCLFICIILTAVTVVTTA. Topologically, residues 58 to 121 are periplasmic; the sequence is HHTRLLTAQR…PSQENIVVQK (64 aa).

It belongs to the FtsL family. As to quaternary structure, part of a complex composed of FtsB, FtsL and FtsQ.

It is found in the cell inner membrane. In terms of biological role, essential cell division protein. May link together the upstream cell division proteins, which are predominantly cytoplasmic, with the downstream cell division proteins, which are predominantly periplasmic. The polypeptide is Cell division protein FtsL (Shigella dysenteriae serotype 1 (strain Sd197)).